The chain runs to 371 residues: tRNA-specific 2-thiouridylase MnmA (371 aa).

Residues 12–19 and Met38 contribute to the ATP site; that span reads GMSGGVDS. An interaction with target base in tRNA region spans residues 98–100; it reads NPD. Residue Cys103 is the Nucleophile of the active site. Cysteines 103 and 200 form a disulfide. Gly128 is an ATP binding site. The segment at 150-152 is interaction with tRNA; that stretch reads KDQ. Catalysis depends on Cys200, which acts as the Cysteine persulfide intermediate. Positions 312 to 313 are interaction with tRNA; it reads RY.

This sequence belongs to the MnmA/TRMU family. In terms of assembly, interacts with TusE.

Its subcellular location is the cytoplasm. It carries out the reaction S-sulfanyl-L-cysteinyl-[protein] + uridine(34) in tRNA + AH2 + ATP = 2-thiouridine(34) in tRNA + L-cysteinyl-[protein] + A + AMP + diphosphate + H(+). Functionally, catalyzes the 2-thiolation of uridine at the wobble position (U34) of tRNA(Lys), tRNA(Glu) and tRNA(Gln), leading to the formation of s(2)U34, the first step of tRNA-mnm(5)s(2)U34 synthesis. Sulfur is provided by IscS, via a sulfur-relay system. Binds ATP and its substrate tRNAs. The polypeptide is tRNA-specific 2-thiouridylase MnmA (Yersinia pestis bv. Antiqua (strain Antiqua)).